We begin with the raw amino-acid sequence, 92 residues long: UPF0297 protein TTE1249 (92 aa).

The protein belongs to the UPF0297 family.

In Caldanaerobacter subterraneus subsp. tengcongensis (strain DSM 15242 / JCM 11007 / NBRC 100824 / MB4) (Thermoanaerobacter tengcongensis), this protein is UPF0297 protein TTE1249.